The chain runs to 491 residues: Regulatory protein NPR5 (491 aa).

Residues 26 to 116 enclose the BTB domain; it reads SDVTFSVEGR…LYSGQVSIVP (91 aa). The segment at 122–136 adopts a C2HC NPR-type zinc-finger fold; the sequence is RPNCGERGCWHTHCS. Zn(2+)-binding residues include Cys-125, Cys-130, His-132, and Cys-135. ANK repeat units lie at residues 254–283, 284–313, 318–347, and 351–385; these read QKIR…LNLD, ESLA…DVNY, AGKT…DPNV, and GGIT…KLRL. Residues 400-491 form a disordered region; sequence EEGNNSNNQN…MYHHHHQHHF (92 aa). The span at 403–413 shows a compositional bias: low complexity; the sequence is NNSNNQNNDNN. Residues 457-470 are compositionally biased toward basic and acidic residues; that stretch reads DQGDDHNSQREGMS.

It belongs to the plant 'ANKYRIN-BTB/POZ' family. 'NOOT-BOP-COCH-like' (NBCL) subfamily. As to quaternary structure, homodimer or heterodimer with BOP1. Interacts with PAN. In terms of tissue distribution, highly expressed in young floral meristem. Predominantly expressed in the boundary between floral meristem (FM) and sepal primordia.

It is found in the cytoplasm. Its subcellular location is the nucleus. It participates in protein modification; protein ubiquitination. In terms of biological role, may act as a substrate-specific adapter of an E3 ubiquitin-protein ligase complex (CUL3-RBX1-BTB) which mediates the ubiquitination and subsequent proteasomal degradation of target proteins. Acts redundantly with BOP2. BOP1/2 promote leaf and floral meristem fate and determinacy in a pathway targeting AP1 and AGL24. BOP1/2 act as transcriptional co-regulators through direct interaction with TGA factors, including PAN, a direct regulator of AP1. Controls lateral organ fate through positive regulation of adaxial-abaxial polarity genes ATHB-14/PHB, YAB1/FIL and YAB3, and through positive regulation of LOB domain-containing genes LOB, LBD6/AS2 and LBD36. Promotes and maintains a developmentally determinate state in leaf cells through the negative regulation of JAG, JGL and class I KNOX genes. Is also involved in nectary development, formation of normal abscission zones (AZs) and suppression of bract formation, probably by regulating the cell wall disorganization. The polypeptide is Regulatory protein NPR5 (Arabidopsis thaliana (Mouse-ear cress)).